A 342-amino-acid chain; its full sequence is Heat-inducible transcription repressor HrcA (342 aa).

The protein belongs to the HrcA family.

In terms of biological role, negative regulator of class I heat shock genes (grpE-dnaK-dnaJ and groELS operons). Prevents heat-shock induction of these operons. This Leptospira interrogans serogroup Icterohaemorrhagiae serovar copenhageni (strain Fiocruz L1-130) protein is Heat-inducible transcription repressor HrcA.